The primary structure comprises 81 residues: RNA-binding protein Hfq (81 aa).

Positions 10 to 69 (DPFLNTLRKEHVPVSIYLVNGIKLQGQVDSFDQYVILLKNTVTQMVYKHAISTIVPGRAV) constitute a Sm domain.

It belongs to the Hfq family. As to quaternary structure, homohexamer.

Functionally, RNA chaperone that binds small regulatory RNA (sRNAs) and mRNAs to facilitate mRNA translational regulation in response to envelope stress, environmental stress and changes in metabolite concentrations. Also binds with high specificity to tRNAs. The chain is RNA-binding protein Hfq from Methylobacillus flagellatus (strain ATCC 51484 / DSM 6875 / VKM B-1610 / KT).